The following is a 224-amino-acid chain: Prolactin-2C3 (224 aa).

Residues 1–29 (MLPSSIQPCSWILLLLLVNSSLLWKNVAS) form the signal peptide. N19 carries an N-linked (GlcNAc...) asparagine glycan. C33 and C40 are joined by a disulfide. N-linked (GlcNAc...) asparagine glycosylation is found at N57, N75, and N88. 2 cysteine pairs are disulfide-bonded: C87–C199 and C216–C224.

The protein belongs to the somatotropin/prolactin family. N-glycosylated and sialylated. As to expression, expressed in placenta and hair follicles, with highest expression levels detected in the outer root sheath and no expression detected in bulb. Expressed in placenta, skin wounds, keratinocytes and weakly in embryonic fibroblasts. Expressed in brain, cerebellum and in Neuro-2a cell line. Not detected in liver, kidney, ovary, pituitary gland and brain.

The protein localises to the secreted. It is found in the endoplasmic reticulum. In terms of biological role, may have a role in embryonic development. It is likely to provide a growth stimulus to target cells in maternal and fetal tissues during the development of the embryo at mid-gestation. May play a role during wound healing and in the hair follicle cycle as a growth factor and/or an angiogenesis factor. May play a role in microvilli formation and cell proliferation of neuroblastoma cells. In Mus musculus (Mouse), this protein is Prolactin-2C3 (Prl2c3).